Here is an 842-residue protein sequence, read N- to C-terminus: CRM-domain containing factor CFM3, chloroplastic/mitochondrial (842 aa).

A chloroplast and mitochondrion-targeting transit peptide spans 1-82 (MAMASSPACH…RSSGRSTMSL (82 aa)). Disordered regions lie at residues 49–80 (AALD…RSTM), 141–160 (RFPW…SARS), and 254–290 (VDYD…LPTE). Positions 167 to 263 (LTLPAAELRR…VDYDEPEPTK (97 aa)) constitute a CRM 1 domain. Positions 280–290 (GSSNPSLLPTE) are enriched in polar residues. 2 CRM domains span residues 371-468 (PSLS…ELAE) and 582-682 (ETIT…SSLR). Residues 703-732 (QALSRHFAKLNRKVERLKAELVQMEDVKEQ) adopt a coiled-coil conformation. Residues 768-842 (VAGATADDDG…DRRNHDVNEY (75 aa)) are disordered. Residues 786-812 (DEADYPDSDDEAGDCSEDEGEDDEDEA) show a composition bias toward acidic residues. Basic and acidic residues predominate over residues 831–842 (DTDRRNHDVNEY).

Interacts with RNA. Part of large ribonucleo-protein particles that contain CAF1 and/or CAF2, and RNC1.

The protein resides in the plastid. The protein localises to the chloroplast stroma. It localises to the mitochondrion. In terms of biological role, binds specific group II introns in chloroplasts and facilitates their splicing. Acts on subgroup IIB introns. The substrates of the subgroup IIB also require the CRM domain proteins CAF1 or CAF2, with a simultaneous binding of CFM3 and CAF1 or CAF2. May influence the biogenesis of the mitochondrial small ribosomal subunit. In Zea mays (Maize), this protein is CRM-domain containing factor CFM3, chloroplastic/mitochondrial.